Reading from the N-terminus, the 140-residue chain is Cytochrome c oxidase subunit 6, mitochondrial (140 aa).

The protein belongs to the cytochrome c oxidase subunit 5A family. In terms of assembly, component of the cytochrome c oxidase (complex IV, CIV), a multisubunit enzyme composed of a catalytic core of 3 subunits and several supernumerary subunits. The complex exists as a monomer or a dimer and forms supercomplexes (SCs) in the inner mitochondrial membrane with ubiquinol-cytochrome c oxidoreductase (cytochrome b-c1 complex, complex III, CIII).

The protein resides in the mitochondrion inner membrane. Its pathway is energy metabolism; oxidative phosphorylation. In terms of biological role, component of the cytochrome c oxidase, the last enzyme in the mitochondrial electron transport chain which drives oxidative phosphorylation. The respiratory chain contains 3 multisubunit complexes succinate dehydrogenase (complex II, CII), ubiquinol-cytochrome c oxidoreductase (cytochrome b-c1 complex, complex III, CIII) and cytochrome c oxidase (complex IV, CIV), that cooperate to transfer electrons derived from NADH and succinate to molecular oxygen, creating an electrochemical gradient over the inner membrane that drives transmembrane transport and the ATP synthase. Cytochrome c oxidase is the component of the respiratory chain that catalyzes the reduction of oxygen to water. Electrons originating from reduced cytochrome c in the intermembrane space (IMS) are transferred via the dinuclear copper A center (CU(A)) of subunit 2 and heme A of subunit 1 to the active site in subunit 1, a binuclear center (BNC) formed by heme A3 and copper B (CU(B)). The BNC reduces molecular oxygen to 2 water molecules using 4 electrons from cytochrome c in the IMS and 4 protons from the mitochondrial matrix. In Schizosaccharomyces pombe (strain 972 / ATCC 24843) (Fission yeast), this protein is Cytochrome c oxidase subunit 6, mitochondrial (cox6).